The chain runs to 840 residues: DNA mismatch repair protein MutS (840 aa).

An ATP-binding site is contributed by 601-608; that stretch reads GPNMSGKS.

It belongs to the DNA mismatch repair MutS family.

In terms of biological role, this protein is involved in the repair of mismatches in DNA. It is possible that it carries out the mismatch recognition step. This protein has a weak ATPase activity. The protein is DNA mismatch repair protein MutS of Lactococcus lactis subsp. cremoris (strain SK11).